A 1002-amino-acid chain; its full sequence is Mitogen-activated protein kinase kinase kinase 21 (1002 aa).

The tract at residues 1–26 (MALPVAEGTADTPLSPARDDSGSTSS) is disordered. Positions 24 to 88 (TSSGMWAALY…PASYVAPCGP (65 aa)) constitute an SH3 domain. The region spanning 110-390 (LELKELIGAG…QLTAIEEAVL (281 aa)) is the Protein kinase domain. Residues 116–124 (IGAGGFGQV) and Lys-137 each bind ATP. Asp-247 (proton acceptor) is an active-site residue. Thr-283 is subject to Phosphothreonine; by autocatalysis. At Ser-287 the chain carries Phosphoserine; by autocatalysis and MAP4K1. Leucine-zipper stretches follow at residues 409 to 430 (IQQM…EEEL) and 444 to 466 (LRRR…LNVL). 6 disordered regions span residues 508 to 531 (TVQA…PPGS), 574 to 604 (GCTW…NSPW), 640 to 689 (HRKP…VGAP), 721 to 778 (AQAP…SHSS), 797 to 823 (LGNA…SGCE), and 878 to 899 (QSAP…RDLA). Residues Ser-512, Ser-527, and Ser-531 each carry the phosphoserine modification. Residue Thr-576 is modified to Phosphothreonine. Over residues 584 to 596 (TKERPEGRERVRP) the composition is skewed to basic and acidic residues. At Ser-598 the chain carries Phosphoserine. Over residues 661–677 (DSQREDSSEAESREEGS) the composition is skewed to basic and acidic residues. Low complexity-rich tracts occupy residues 740–758 (QPAS…QPSA) and 766–778 (STLL…SHSS).

The protein belongs to the protein kinase superfamily. STE Ser/Thr protein kinase family. MAP kinase kinase kinase subfamily. In terms of assembly, homodimer. Interacts with TLR4. Mg(2+) is required as a cofactor. Autophosphorylation on serine and threonine residues within the activation loop plays a role in enzyme activation.

It catalyses the reaction L-seryl-[protein] + ATP = O-phospho-L-seryl-[protein] + ADP + H(+). It carries out the reaction L-threonyl-[protein] + ATP = O-phospho-L-threonyl-[protein] + ADP + H(+). Homodimerization via the leucine zipper domains is required for autophosphorylation and subsequent activation. Negative regulator of TLR4 signaling. Does not activate JNK1/MAPK8 pathway, p38/MAPK14, nor ERK2/MAPK1 pathways. This chain is Mitogen-activated protein kinase kinase kinase 21 (Map3k21), found in Mus musculus (Mouse).